Consider the following 476-residue polypeptide: Bifunctional protein HldE (476 aa).

The ribokinase stretch occupies residues 1 to 318; sequence MAQYSAEFKQ…ENAIHARPET (318 aa). Residue 195–198 coordinates ATP; it reads NMSE. Asp-264 is an active-site residue. The tract at residues 344-476 is cytidylyltransferase; the sequence is MTNGCFDILH…VIEKIKLLKD (133 aa).

The protein in the N-terminal section; belongs to the carbohydrate kinase PfkB family. This sequence in the C-terminal section; belongs to the cytidylyltransferase family. In terms of assembly, homodimer.

It catalyses the reaction D-glycero-beta-D-manno-heptose 7-phosphate + ATP = D-glycero-beta-D-manno-heptose 1,7-bisphosphate + ADP + H(+). It carries out the reaction D-glycero-beta-D-manno-heptose 1-phosphate + ATP + H(+) = ADP-D-glycero-beta-D-manno-heptose + diphosphate. Its pathway is nucleotide-sugar biosynthesis; ADP-L-glycero-beta-D-manno-heptose biosynthesis; ADP-L-glycero-beta-D-manno-heptose from D-glycero-beta-D-manno-heptose 7-phosphate: step 1/4. The protein operates within nucleotide-sugar biosynthesis; ADP-L-glycero-beta-D-manno-heptose biosynthesis; ADP-L-glycero-beta-D-manno-heptose from D-glycero-beta-D-manno-heptose 7-phosphate: step 3/4. Catalyzes the phosphorylation of D-glycero-D-manno-heptose 7-phosphate at the C-1 position to selectively form D-glycero-beta-D-manno-heptose-1,7-bisphosphate. Functionally, catalyzes the ADP transfer from ATP to D-glycero-beta-D-manno-heptose 1-phosphate, yielding ADP-D-glycero-beta-D-manno-heptose. The chain is Bifunctional protein HldE from Haemophilus influenzae (strain PittGG).